A 182-amino-acid chain; its full sequence is Late embryogenesis abundant protein 3 (182 aa).

Residues 1–51 are disordered; it reads MAQHQHSPQRPRDQDNTRPHDQYGIVFSVSGDDVARKQGDSFSQPDPTVAT. A Nuclear localization signal (NLS) motif is present at residues 7–11; that stretch reads SPQRP. A compositionally biased stretch (basic and acidic residues) spans 10-21; sequence RPRDQDNTRPHD. SMP domains lie at 58–115 and 123–181; these read VTIG…TNEQ and VNIA…LNQQ. Positions 145–182 are disordered; the sequence is EDAEAVVGAELRSSSEMKTTPGGVADSMSAGARLNQQL.

It belongs to the LEA type SMP family.

The protein localises to the cytoplasm. It localises to the nucleus. LEA proteins are late embryonic proteins abundant in higher plant seed embryos. The function of those proteins is not known. The sequence is that of Late embryogenesis abundant protein 3 from Arabidopsis thaliana (Mouse-ear cress).